The sequence spans 110 residues: uncharacterized protein (110 aa).

The segment covering 1-20 (MNQQNQKISNPQTPVPTTSE) has biased composition (polar residues). The segment at 1–24 (MNQQNQKISNPQTPVPTTSEMNDR) is disordered.

This is an uncharacterized protein from Bacillus subtilis (strain 168).